The following is a 168-amino-acid chain: G/U mismatch-specific DNA glycosylase (168 aa).

This sequence belongs to the uracil-DNA glycosylase (UDG) superfamily. TDG/mug family. As to quaternary structure, binds DNA as a monomer.

The protein resides in the cytoplasm. It carries out the reaction Specifically hydrolyzes mismatched double-stranded DNA and polynucleotides, releasing free uracil.. Excises ethenocytosine and uracil, which can arise by alkylation or deamination of cytosine, respectively, from the corresponding mispairs with guanine in ds-DNA. It is capable of hydrolyzing the carbon-nitrogen bond between the sugar-phosphate backbone of the DNA and the mispaired base. The complementary strand guanine functions in substrate recognition. Required for DNA damage lesion repair in stationary-phase cells. The sequence is that of G/U mismatch-specific DNA glycosylase from Cronobacter sakazakii (strain ATCC BAA-894) (Enterobacter sakazakii).